We begin with the raw amino-acid sequence, 347 residues long: Anthranilate phosphoribosyltransferase (347 aa).

5-phospho-alpha-D-ribose 1-diphosphate contacts are provided by residues G88, 91-92 (GD), T96, 98-101 (NIST), 116-124 (KHGNRSVSS), and S128. G88 serves as a coordination point for anthranilate. Residue S100 coordinates Mg(2+). N119 serves as a coordination point for anthranilate. R174 serves as a coordination point for anthranilate. Positions 232 and 233 each coordinate Mg(2+).

This sequence belongs to the anthranilate phosphoribosyltransferase family. As to quaternary structure, homodimer. Requires Mg(2+) as cofactor.

The catalysed reaction is N-(5-phospho-beta-D-ribosyl)anthranilate + diphosphate = 5-phospho-alpha-D-ribose 1-diphosphate + anthranilate. The protein operates within amino-acid biosynthesis; L-tryptophan biosynthesis; L-tryptophan from chorismate: step 2/5. Functionally, catalyzes the transfer of the phosphoribosyl group of 5-phosphorylribose-1-pyrophosphate (PRPP) to anthranilate to yield N-(5'-phosphoribosyl)-anthranilate (PRA). In Shewanella sp. (strain MR-7), this protein is Anthranilate phosphoribosyltransferase.